The primary structure comprises 1488 residues: Chromosome partition protein MukB (1488 aa).

34 to 41 (GGNGAGKS) is a binding site for ATP. Coiled coils occupy residues 326–418 (LEAD…QYNQ), 444–472 (LDTF…QTAH), and 509–602 (RHLA…QRAP). Residues 666–783 (PGGAEDQRLN…SLPIFGRAAR (118 aa)) form a flexible hinge region. Coiled-coil stretches lie at residues 835–923 (EAEI…AKLE), 977–1116 (EMLS…AKAG), and 1209–1265 (VEAI…LQSV). The disordered stretch occupies residues 1049 to 1074 (ADSGAEERARQRRDELHAQLSNNRSR). Basic and acidic residues predominate over residues 1051–1065 (SGAEERARQRRDELH).

This sequence belongs to the SMC family. MukB subfamily. As to quaternary structure, homodimerization via its hinge domain. Binds to DNA via its C-terminal region. Interacts, and probably forms a ternary complex, with MukE and MukF via its C-terminal region. The complex formation is stimulated by calcium or magnesium. Interacts with tubulin-related protein FtsZ.

The protein localises to the cytoplasm. The protein resides in the nucleoid. Its function is as follows. Plays a central role in chromosome condensation, segregation and cell cycle progression. Functions as a homodimer, which is essential for chromosome partition. Involved in negative DNA supercoiling in vivo, and by this means organize and compact chromosomes. May achieve or facilitate chromosome segregation by condensation DNA from both sides of a centrally located replisome during cell division. The protein is Chromosome partition protein MukB of Salmonella typhimurium (strain LT2 / SGSC1412 / ATCC 700720).